The chain runs to 107 residues: Iron-binding protein IscA (107 aa).

Fe cation is bound by residues Cys35, Cys99, and Cys101.

The protein belongs to the HesB/IscA family. Homodimer; may form tetramers and higher multimers. Fe cation is required as a cofactor.

In terms of biological role, is able to transfer iron-sulfur clusters to apo-ferredoxin. Multiple cycles of [2Fe2S] cluster formation and transfer are observed, suggesting that IscA acts catalytically. Recruits intracellular free iron so as to provide iron for the assembly of transient iron-sulfur cluster in IscU in the presence of IscS, L-cysteine and the thioredoxin reductase system TrxA/TrxB. In Yersinia pestis bv. Antiqua (strain Angola), this protein is Iron-binding protein IscA.